The following is an 858-amino-acid chain: Elongation factor 2 (858 aa).

In terms of domain architecture, tr-type G spans A17–V362. Residues A26 to S33, N158 to D161, and S216 to L218 each bind GTP. Diphthamide is present on H715.

The protein belongs to the TRAFAC class translation factor GTPase superfamily. Classic translation factor GTPase family. EF-G/EF-2 subfamily. As to quaternary structure, binds to 80S ribosomes. Actively translating ribosomes show mutually exclusive binding of eIF5a (EIF5A or EIF5A2) and EEF2/eEF2. Interacts with serbp1; interaction sequesters eef2/eEF2 at the A-site of the ribosome, thereby blocking the interaction sites of the mRNA-tRNA complex, promoting ribosome stabilization and hibernation. Interacts with habp4; interaction takes place at the A-site of hibernating ribosomes and promotes ribosome stabilization.

The protein localises to the cytoplasm. It is found in the nucleus. The catalysed reaction is GTP + H2O = GDP + phosphate + H(+). Functionally, catalyzes the GTP-dependent ribosomal translocation step during translation elongation. During this step, the ribosome changes from the pre-translocational (PRE) to the post-translocational (POST) state as the newly formed A-site-bound peptidyl-tRNA and P-site-bound deacylated tRNA move to the P and E sites, respectively. Catalyzes the coordinated movement of the two tRNA molecules, the mRNA and conformational changes in the ribosome. The sequence is that of Elongation factor 2 from Xenopus laevis (African clawed frog).